Consider the following 469-residue polypeptide: Light-independent protochlorophyllide reductase subunit N (469 aa).

Cys-24, Cys-49, and Cys-109 together coordinate [4Fe-4S] cluster.

It belongs to the BchN/ChlN family. In terms of assembly, protochlorophyllide reductase is composed of three subunits; ChlL, ChlN and ChlB. Forms a heterotetramer of two ChlB and two ChlN subunits. [4Fe-4S] cluster is required as a cofactor.

The enzyme catalyses chlorophyllide a + oxidized 2[4Fe-4S]-[ferredoxin] + 2 ADP + 2 phosphate = protochlorophyllide a + reduced 2[4Fe-4S]-[ferredoxin] + 2 ATP + 2 H2O. Its pathway is porphyrin-containing compound metabolism; chlorophyll biosynthesis (light-independent). Functionally, component of the dark-operative protochlorophyllide reductase (DPOR) that uses Mg-ATP and reduced ferredoxin to reduce ring D of protochlorophyllide (Pchlide) to form chlorophyllide a (Chlide). This reaction is light-independent. The NB-protein (ChlN-ChlB) is the catalytic component of the complex. This is Light-independent protochlorophyllide reductase subunit N from Gloeobacter violaceus (strain ATCC 29082 / PCC 7421).